The chain runs to 335 residues: Phosphate acyltransferase (335 aa).

Belongs to the PlsX family. In terms of assembly, homodimer. Probably interacts with PlsY.

It is found in the cytoplasm. The enzyme catalyses a fatty acyl-[ACP] + phosphate = an acyl phosphate + holo-[ACP]. It participates in lipid metabolism; phospholipid metabolism. Functionally, catalyzes the reversible formation of acyl-phosphate (acyl-PO(4)) from acyl-[acyl-carrier-protein] (acyl-ACP). This enzyme utilizes acyl-ACP as fatty acyl donor, but not acyl-CoA. This Clostridium botulinum (strain Langeland / NCTC 10281 / Type F) protein is Phosphate acyltransferase.